A 233-amino-acid polypeptide reads, in one-letter code: MSARAAWLVQAGCLDYAQVWAWQRQLQDNRRNNPDRPDVLLLLEHPAVYTLGRGSSLAHLKFDPQHPPAPVYRIERGGEVTHHAPGQLVGYPILNLRHHRCDLHWYLRQLEAVLILVLANYGLTGERIEGLTGVWVEGKKLAAIGIQVSRWISLHGFALNVCPDLAGFEAIVPCGISDRAVGSLVEFCPDVRLEVVRSQVAGAFAQTFELDLQPCSLEQLQAEENLTAIAGDP.

The BPL/LPL catalytic domain maps to 34-212 (PDRPDVLLLL…AFAQTFELDL (179 aa)). Substrate contacts are provided by residues 76-83 (RGGEVTHH), 143-145 (AIG), and 156-158 (GFA). Cys-174 acts as the Acyl-thioester intermediate in catalysis.

This sequence belongs to the LipB family.

It is found in the cytoplasm. It catalyses the reaction octanoyl-[ACP] + L-lysyl-[protein] = N(6)-octanoyl-L-lysyl-[protein] + holo-[ACP] + H(+). Its pathway is protein modification; protein lipoylation via endogenous pathway; protein N(6)-(lipoyl)lysine from octanoyl-[acyl-carrier-protein]: step 1/2. In terms of biological role, catalyzes the transfer of endogenously produced octanoic acid from octanoyl-acyl-carrier-protein onto the lipoyl domains of lipoate-dependent enzymes. Lipoyl-ACP can also act as a substrate although octanoyl-ACP is likely to be the physiological substrate. This is Octanoyltransferase from Synechococcus elongatus (strain ATCC 33912 / PCC 7942 / FACHB-805) (Anacystis nidulans R2).